Here is a 24-residue protein sequence, read N- to C-terminus: Flavin reductase (NADPH) (24 aa).

NADP(+) contacts are provided by Gly-9, Thr-11, Gly-12, and Thr-14.

Belongs to the BLVRB family. As to quaternary structure, monomer. As to expression, detected in erythrocytes (at protein level).

The protein localises to the cytoplasm. It carries out the reaction reduced riboflavin + NADP(+) = riboflavin + NADPH + 2 H(+). The catalysed reaction is bilirubin IXbeta + NADP(+) = biliverdin IXbeta + NADPH + H(+). It catalyses the reaction FMNH2 + NAD(+) = FMN + NADH + 2 H(+). The enzyme catalyses FMNH2 + NADP(+) = FMN + NADPH + 2 H(+). It carries out the reaction S-nitroso-CoA + L-cysteinyl-[protein] = S-nitroso-L-cysteinyl-[protein] + CoA. The catalysed reaction is L-cysteinyl-[SCAN] + S-nitroso-CoA = S-nitroso-L-cysteinyl-[SCAN] + CoA. It catalyses the reaction S-nitroso-L-cysteinyl-[SCAN] + L-cysteinyl-[protein] = L-cysteinyl-[SCAN] + S-nitroso-L-cysteinyl-[protein]. Enzyme that can both act as a NAD(P)H-dependent reductase and a S-nitroso-CoA-dependent nitrosyltransferase. Promotes fetal heme degradation during development. Also expressed in adult tissues, where it acts as a regulator of hematopoiesis, intermediary metabolism (glutaminolysis, glycolysis, TCA cycle and pentose phosphate pathway) and insulin signaling. Has a broad specificity oxidoreductase activity by catalyzing the NAD(P)H-dependent reduction of a variety of flavins, such as riboflavin, FAD or FMN, biliverdins, methemoglobin and PQQ (pyrroloquinoline quinone). Contributes to fetal heme catabolism by catalyzing reduction of biliverdin IXbeta into bilirubin IXbeta in the liver. Biliverdin IXbeta, which constitutes the major heme catabolite in the fetus is not present in adult. Does not reduce bilirubin IXalpha. Can also reduce the complexed Fe(3+) iron to Fe(2+) in the presence of FMN and NADPH. Acts as a protein nitrosyltransferase by catalyzing nitrosylation of cysteine residues of target proteins, such as HMOX2, INSR and IRS1. S-nitroso-CoA-dependent nitrosyltransferase activity is mediated via a 'ping-pong' mechanism: BLVRB first associates with both S-nitroso-CoA and protein substrate, nitric oxide group is then transferred from S-nitroso-CoA to Cys residues of BLVRB and from S-nitroso-BLVRB to the protein substrate. Inhibits insulin signaling by mediating nitrosylation of INSR and IRS1, leading to their inhibition. The protein is Flavin reductase (NADPH) (BLVRB) of Aquarana catesbeiana (American bullfrog).